Here is a 1088-residue protein sequence, read N- to C-terminus: DNA ligase 4 (1088 aa).

Disordered stretches follow at residues 1–56 (MALS…KFND) and 73–117 (TTTT…TTTT). Composition is skewed to low complexity over residues 25–53 (DFKN…YNNK) and 73–90 (TTTT…INKT). Residues 95 to 105 (DDIFDDEDEDS) show a composition bias toward acidic residues. ATP-binding residues include Glu414, Lys416, Arg421, Glu467, Phe514, Glu574, Lys579, Lys596, and Lys598. The N6-AMP-lysine intermediate role is filled by Lys416. Glu467 serves as a coordination point for Mg(2+). Glu574 contacts Mg(2+). BRCT domains are found at residues 827–917 (PTQN…PKYM) and 984–1088 (CWWS…EILD).

The protein belongs to the ATP-dependent DNA ligase family. Mg(2+) is required as a cofactor.

The protein localises to the nucleus. It carries out the reaction ATP + (deoxyribonucleotide)n-3'-hydroxyl + 5'-phospho-(deoxyribonucleotide)m = (deoxyribonucleotide)n+m + AMP + diphosphate.. DNA ligase involved in DNA non-homologous end joining (NHEJ); required for double-strand break (DSB) repair. The sequence is that of DNA ligase 4 (lig4) from Dictyostelium discoideum (Social amoeba).